Reading from the N-terminus, the 394-residue chain is Envelope glycoprotein D (394 aa).

The signal sequence occupies residues 1-25 (MGGAAARLGAVILFVVIVGLHGVRS). An interaction with TNFRSF14 region spans residues 26 to 57 (KYALVDASLKMADPNRFRGKDLPVLDQLTDPP). Residues 26-340 (KYALVDASLK…YHPPATPNNM (315 aa)) lie on the Virion surface side of the membrane. Zn(2+) is bound at residue His-64. Intrachain disulfides connect Cys-91/Cys-214, Cys-131/Cys-227, and Cys-143/Cys-152. 2 N-linked (GlcNAc...) asparagine; by host glycosylation sites follow: Asn-119 and Asn-146. Asp-240 is a Zn(2+) binding site. The tract at residues 261–305 (LKIAGWHGPKAPYTSTLLPPELSETPNATQPELAPEDPEDSALLE) is profusion. The segment at 275 to 301 (STLLPPELSETPNATQPELAPEDPEDS) is disordered. N-linked (GlcNAc...) asparagine; by host glycosylation occurs at Asn-287. Residues 341-361 (GLIAGAVGGSLLAALVICGIV) traverse the membrane as a helical segment. Residues 362–394 (YWMRRHTQKAPKRIRLPHIREDDQPSSHQPLFY) lie on the Intravirion side of the membrane. The segment at 375–394 (IRLPHIREDDQPSSHQPLFY) is disordered.

This sequence belongs to the herpesviridae glycoprotein D family. As to quaternary structure, homodimer. Interacts with host receptor TNFRSF14. Interacts with host receptor NECTIN1. Interacts (via profusion domain) with gB; this interaction occurs in the absence of gH/gL. Interacts (via profusion domain) with gH/gL heterodimer; this interaction occurs in the absence of gB. Associates with the gB-gH/gL-gD complex. Interacts (via C-terminus) with UL11 tegument protein. Interacts (via C-terminus) with VP22 tegument protein; this interaction has been demonstrated in other strains, but might be very weak since PubMed:19279114 has failed to see it. Interacts with host RSAD2.

It is found in the virion membrane. Its subcellular location is the host Golgi apparatus. Functionally, envelope glycoprotein that binds to the host cell entry receptors NECTIN1, TNFRSF14/HVEM and 3-O-sulfated heparan sulfate, promoting the virus entry into host cells. May trigger fusion with host membrane, by recruiting the fusion machinery composed of gB and gH/gL. The polypeptide is Envelope glycoprotein D (gD) (Homo sapiens (Human)).